The chain runs to 144 residues: INO80 complex subunit 5 (144 aa).

Positions 1 to 58 (MAAQKKQGERVLPARSTRKRRQLPDMLYYDERTDSYVTPQERSLSEANAQTRPAPNTI) are disordered. A compositionally biased stretch (polar residues) spans 35–58 (SYVTPQERSLSEANAQTRPAPNTI).

As to quaternary structure, component of the INO80 chromatin remodeling complex.

It is found in the nucleus. Component of the INO80 complex which remodels chromatin by shifting nucleosomes and is involved in DNA repair. In Schizosaccharomyces pombe (strain 972 / ATCC 24843) (Fission yeast), this protein is INO80 complex subunit 5 (iec5).